A 690-amino-acid polypeptide reads, in one-letter code: Elongation factor G (690 aa).

The 276-residue stretch at 8 to 283 (DKYRNIGIMA…AVVDFLPSPL (276 aa)) folds into the tr-type G domain. Residues 17–24 (AHIDAGKT), 81–85 (DTPGH), and 135–138 (NKLD) each bind GTP.

The protein belongs to the TRAFAC class translation factor GTPase superfamily. Classic translation factor GTPase family. EF-G/EF-2 subfamily.

The protein resides in the cytoplasm. Its function is as follows. Catalyzes the GTP-dependent ribosomal translocation step during translation elongation. During this step, the ribosome changes from the pre-translocational (PRE) to the post-translocational (POST) state as the newly formed A-site-bound peptidyl-tRNA and P-site-bound deacylated tRNA move to the P and E sites, respectively. Catalyzes the coordinated movement of the two tRNA molecules, the mRNA and conformational changes in the ribosome. In Zymomonas mobilis subsp. mobilis (strain ATCC 31821 / ZM4 / CP4), this protein is Elongation factor G.